The following is a 718-amino-acid chain: Potassium channel KAT1 (718 aa).

Residues 1 to 60 lie on the Cytoplasmic side of the membrane; sequence MTQAHSKSCFHQFWDGLQIKRSSDSFTVELLPSLGATINHSNKLQKFIISPYDPRYRSWE. Residues 61–81 form a helical membrane-spanning segment; it reads LFLIVLVVYSAWICPFELAFL. Topologically, residues 82–88 are extracellular; it reads RDLPSKL. A helical membrane pass occupies residues 89–109; it reads LLVENIVDIFFAIDIVLTFFV. Residues 110 to 132 lie on the Cytoplasmic side of the membrane; the sequence is AYVDSKTHLLVDDRKRIAMRYLS. A helical transmembrane segment spans residues 133 to 153; that stretch reads TWFIFDVCSTAPFQPIILLFT. Residues 154–162 are Extracellular-facing; sequence HKGNDIAFK. A helical; Voltage-sensor transmembrane segment spans residues 163–183; sequence VLNLLRLWRLHRVSSLFARLE. Over 184–197 the chain is Cytoplasmic; sequence KDIRFNYFWTRCSK. The chain crosses the membrane as a helical span at residues 198 to 218; the sequence is LISVTLFAVHCAGCFNYMIAD. Topologically, residues 219 to 245 are extracellular; the sequence is RYPNPEKTWIGAVMSTFRSESLWTRYI. An intramembrane region (pore-forming) is located at residues 246–265; it reads TALYWSITTLTTTGYGDLHA. Residues 266-269 lie on the Extracellular side of the membrane; the sequence is ENPT. The chain crosses the membrane as a helical span at residues 270–290; it reads EMLFDIVYMMFNLGLTAYLIG. Residues 291–718 are Cytoplasmic-facing; it reads NMTNLVVHGT…DGDHLFLLEM (428 aa). Residue 374–493 participates in a nucleoside 3',5'-cyclic phosphate binding; it reads LFNGVSGNFI…NILMNNLVQK (120 aa). The tract at residues 560-584 is disordered; sequence EATRSSASENENSSMTDKEENHDEV. Residues 562–574 show a composition bias toward polar residues; sequence TRSSASENENSSM. Over residues 575–584 the composition is skewed to basic and acidic residues; the sequence is TDKEENHDEV. Residues 647-718 form the KHA domain; sequence RVTIHKYRHN…DGDHLFLLEM (72 aa).

This sequence belongs to the potassium channel family. Plant (TC 1.A.1.4) subfamily.

It is found in the membrane. Probable inward-rectifying potassium channel. Assuming opened or closed conformations in response to the voltage difference across the membrane, the channel is activated by hyperpolarization. This Oryza sativa subsp. japonica (Rice) protein is Potassium channel KAT1.